The chain runs to 518 residues: Type II methyltransferase M.HindII (518 aa).

It belongs to the N(4)/N(6)-methyltransferase family.

It catalyses the reaction a 2'-deoxyadenosine in DNA + S-adenosyl-L-methionine = an N(6)-methyl-2'-deoxyadenosine in DNA + S-adenosyl-L-homocysteine + H(+). Its function is as follows. A gamma subtype methylase, recognizes the double-stranded sequence 5'-GTYRAC-3', methylates A-5 on both strands, and protects the DNA from cleavage by the HindII endonuclease. The sequence is that of Type II methyltransferase M.HindII (hindIIM) from Haemophilus influenzae (strain ATCC 51907 / DSM 11121 / KW20 / Rd).